The sequence spans 355 residues: Probable butyrate kinase (355 aa).

The protein belongs to the acetokinase family.

The protein localises to the cytoplasm. The enzyme catalyses butanoate + ATP = butanoyl phosphate + ADP. The sequence is that of Probable butyrate kinase from Listeria innocua serovar 6a (strain ATCC BAA-680 / CLIP 11262).